A 254-amino-acid polypeptide reads, in one-letter code: PF03932 family protein CutC (254 aa).

The protein belongs to the CutC family.

The protein resides in the cytoplasm. This Yersinia pestis bv. Antiqua (strain Antiqua) protein is PF03932 family protein CutC.